The sequence spans 198 residues: Recombination protein RecR (198 aa).

The segment at 57 to 72 (CSVCGHITDRDPCYIC) adopts a C4-type zinc-finger fold. The region spanning 80–175 (SVVCVVQEPK…KVTRIAHGLP (96 aa)) is the Toprim domain.

Belongs to the RecR family.

Its function is as follows. May play a role in DNA repair. It seems to be involved in an RecBC-independent recombinational process of DNA repair. It may act with RecF and RecO. The protein is Recombination protein RecR of Bacillus thuringiensis (strain Al Hakam).